We begin with the raw amino-acid sequence, 159 residues long: MARRNKARKRKISPDSRYDSVLLMRFINVIMKYGKKSVAEKIVYNALSSAEKEVNERGVSIFETAVENVTPSVEVRSRRIGGATYQVPVEVKKDRAVSLALRWIVKSASAMRKKSGKGFFKCLCSEILDAYNKRGGAFKMCEEKYKMAEANKAFSHLRF.

The protein belongs to the universal ribosomal protein uS7 family. As to quaternary structure, part of the 30S ribosomal subunit. Contacts proteins S9 and S11.

Its function is as follows. One of the primary rRNA binding proteins, it binds directly to 16S rRNA where it nucleates assembly of the head domain of the 30S subunit. Is located at the subunit interface close to the decoding center, probably blocks exit of the E-site tRNA. This is Small ribosomal subunit protein uS7 from Wolbachia sp. subsp. Brugia malayi (strain TRS).